The sequence spans 337 residues: DNA-directed RNA polymerase subunit alpha (337 aa).

An alpha N-terminal domain (alpha-NTD) region spans residues 1-233 (MVREEVVGST…DLFIPFLHAE (233 aa)). The interval 265–337 (KEIALKCIFI…FAIDLPKNKF (73 aa)) is alpha C-terminal domain (alpha-CTD).

This sequence belongs to the RNA polymerase alpha chain family. In plastids the minimal PEP RNA polymerase catalytic core is composed of four subunits: alpha, beta, beta', and beta''. When a (nuclear-encoded) sigma factor is associated with the core the holoenzyme is formed, which can initiate transcription.

Its subcellular location is the plastid. It is found in the chloroplast. It carries out the reaction RNA(n) + a ribonucleoside 5'-triphosphate = RNA(n+1) + diphosphate. Functionally, DNA-dependent RNA polymerase catalyzes the transcription of DNA into RNA using the four ribonucleoside triphosphates as substrates. This chain is DNA-directed RNA polymerase subunit alpha, found in Acorus gramineus (Dwarf sweet flag).